Here is a 170-residue protein sequence, read N- to C-terminus: Dual-action ribosomal maturation protein DarP (170 aa).

The protein belongs to the DarP family.

The protein resides in the cytoplasm. Its function is as follows. Member of a network of 50S ribosomal subunit biogenesis factors which assembles along the 30S-50S interface, preventing incorrect 23S rRNA structures from forming. Promotes peptidyl transferase center (PTC) maturation. The chain is Dual-action ribosomal maturation protein DarP from Neisseria meningitidis serogroup A / serotype 4A (strain DSM 15465 / Z2491).